The chain runs to 865 residues: Xylosyltransferase 2 (865 aa).

Over 1 to 15 (MVASARVQKLVRRYK) the chain is Cytoplasmic. Residues 16–36 (LAIATALAILLLQGLVVWSFS) form a helical; Signal-anchor for type II membrane protein membrane-spanning segment. Topologically, residues 37–865 (GLEEDEAGEK…GPVKADGRLR (829 aa)) are lumenal. Residues 41–157 (DEAGEKGRQR…EGAPQPTDNG (117 aa)) are disordered. The segment covering 53-65 (RPLDPGEGSKDTD) has biased composition (basic and acidic residues). Basic residues predominate over residues 73-82 (STGRRHGRWR). N-linked (GlcNAc...) asparagine glycosylation occurs at Asn122. Positions 125 to 137 (GAAAGEALVGAAG) are enriched in low complexity. Disulfide bonds link Cys162-Cys190, Cys206-Cys448, Cys467-Cys480, and Cys469-Cys478. UDP-alpha-D-xylose contacts are provided by residues Val239, Asp267, and 296–298 (TIW). Residue Asn327 is glycosylated (N-linked (GlcNAc...) asparagine). 400–401 (DW) is a UDP-alpha-D-xylose binding site. Residues Ser481 and 504–505 (RK) contribute to the UDP-alpha-D-xylose site. Disulfide bonds link Cys581-Cys833 and Cys826-Cys839. Asn683 is a glycosylation site (N-linked (GlcNAc...) asparagine). The disordered stretch occupies residues 846 to 865 (SLSPDPKSELGPVKADGRLR).

The protein belongs to the glycosyltransferase 14 family. XylT subfamily. Monomer. The cofactor is Mg(2+). Mn(2+) is required as a cofactor. Post-translationally, contains disulfide bonds. As to expression, widely expressed. Expressed at higher level in kidney and pancreas.

The protein resides in the golgi apparatus membrane. It is found in the secreted. The catalysed reaction is UDP-alpha-D-xylose + L-seryl-[protein] = 3-O-(beta-D-xylosyl)-L-seryl-[protein] + UDP + H(+). Its pathway is glycan metabolism; chondroitin sulfate biosynthesis. It functions in the pathway glycan metabolism; heparan sulfate biosynthesis. Its function is as follows. Catalyzes the first step in the biosynthesis of chondroitin sulfate, heparan sulfate and dermatan sulfate proteoglycans, such as DCN. Transfers D-xylose from UDP-D-xylose to specific serine residues of the core protein. The sequence is that of Xylosyltransferase 2 (XYLT2) from Homo sapiens (Human).